A 448-amino-acid polypeptide reads, in one-letter code: Phosphoglucosamine mutase (448 aa).

S99 functions as the Phosphoserine intermediate in the catalytic mechanism. Mg(2+)-binding residues include S99, D239, D241, and D243. Phosphoserine is present on S99.

This sequence belongs to the phosphohexose mutase family. The cofactor is Mg(2+). Post-translationally, activated by phosphorylation.

It carries out the reaction alpha-D-glucosamine 1-phosphate = D-glucosamine 6-phosphate. Its function is as follows. Catalyzes the conversion of glucosamine-6-phosphate to glucosamine-1-phosphate. The polypeptide is Phosphoglucosamine mutase (Lachnoclostridium phytofermentans (strain ATCC 700394 / DSM 18823 / ISDg) (Clostridium phytofermentans)).